Here is a 110-residue protein sequence, read N- to C-terminus: Early E3B 12.7 kDa protein (110 aa).

The signal sequence occupies residues Met1–Ala16. The helical transmembrane segment at Tyr37–Leu57 threads the bilayer.

It belongs to the adenoviridae E3_14 family. In terms of processing, phosphorylated on serine; O-glycosylated, but not N-glycosylated.

It localises to the host membrane. In terms of biological role, down-regulates the EGF receptor and prevents cytolysis by TNF. This is Early E3B 12.7 kDa protein from Homo sapiens (Human).